We begin with the raw amino-acid sequence, 388 residues long: Nuclear hormone receptor family member nhr-16 (388 aa).

The segment at residues 11-86 is a DNA-binding region (nuclear receptor); sequence FLKCAICQES…VGMNPAGVQQ (76 aa). NR C4-type zinc fingers lie at residues 14–34 and 50–74; these read CAICQESAEGFHFGAEACRAC and CQGNNDCDVTINIRCMCRACRYIKC. An NR LBD domain is found at 115–387; the sequence is PPSSLMLHIP…DEFYNLMSGR (273 aa).

This sequence belongs to the nuclear hormone receptor family.

The protein resides in the nucleus. In terms of biological role, orphan nuclear receptor. This is Nuclear hormone receptor family member nhr-16 (nhr-16) from Caenorhabditis elegans.